The primary structure comprises 138 residues: ATP synthase epsilon chain (138 aa).

Belongs to the ATPase epsilon chain family. As to quaternary structure, F-type ATPases have 2 components, CF(1) - the catalytic core - and CF(0) - the membrane proton channel. CF(1) has five subunits: alpha(3), beta(3), gamma(1), delta(1), epsilon(1). CF(0) has three main subunits: a, b and c.

The protein localises to the cell inner membrane. Produces ATP from ADP in the presence of a proton gradient across the membrane. This Psychrobacter arcticus (strain DSM 17307 / VKM B-2377 / 273-4) protein is ATP synthase epsilon chain.